The sequence spans 192 residues: 7-methyl-GTP pyrophosphatase (192 aa).

Residue D69 is the Proton acceptor of the active site.

This sequence belongs to the Maf family. YceF subfamily. A divalent metal cation serves as cofactor.

The protein localises to the cytoplasm. It catalyses the reaction N(7)-methyl-GTP + H2O = N(7)-methyl-GMP + diphosphate + H(+). Functionally, nucleoside triphosphate pyrophosphatase that hydrolyzes 7-methyl-GTP (m(7)GTP). May have a dual role in cell division arrest and in preventing the incorporation of modified nucleotides into cellular nucleic acids. The sequence is that of 7-methyl-GTP pyrophosphatase from Pseudomonas fluorescens (strain ATCC BAA-477 / NRRL B-23932 / Pf-5).